Consider the following 198-residue polypeptide: tRNA (pseudouridine(54)-N(1))-methyltransferase (198 aa).

Leu128 serves as a coordination point for S-adenosyl-L-methionine.

It belongs to the methyltransferase superfamily. TrmY family. As to quaternary structure, homodimer.

It is found in the cytoplasm. It carries out the reaction pseudouridine(54) in tRNA + S-adenosyl-L-methionine = N(1)-methylpseudouridine(54) in tRNA + S-adenosyl-L-homocysteine + H(+). Specifically catalyzes the N1-methylation of pseudouridine at position 54 (Psi54) in tRNAs. This is tRNA (pseudouridine(54)-N(1))-methyltransferase from Natronomonas pharaonis (strain ATCC 35678 / DSM 2160 / CIP 103997 / JCM 8858 / NBRC 14720 / NCIMB 2260 / Gabara) (Halobacterium pharaonis).